A 301-amino-acid polypeptide reads, in one-letter code: MHLEHLVTEQPNGQSANLDALGIPDALALMNREDAGIAARVAHALPAIASGVTVIADALRAGGRLIYIGAGNSGRIGYLDALECQPTFGTQPGEIIGIVAGGFAGITESVEDSDTLGRQDLDAAGLARGDVVVGLTASGRTPYVLGALRHARDTGCRTIAVACNVGSEAAALADVAIEVDCGPEVLTGSTRLKAGTAQKMICNMLSTISMVALGKTYGNLMVDVQVHNHKLRRRAIGIVSQAAGVPTDVAERALEQAGDRPRIAILMLCAGVDRAGAERLADAAGGSIRKALATLAPSTRA.

One can recognise an SIS domain in the interval 55–215 (IADALRAGGR…STISMVALGK (161 aa)). The active-site Proton donor is the Glu83. Glu111 is a catalytic residue.

The protein belongs to the GCKR-like family. MurNAc-6-P etherase subfamily. As to quaternary structure, homodimer.

The enzyme catalyses N-acetyl-D-muramate 6-phosphate + H2O = N-acetyl-D-glucosamine 6-phosphate + (R)-lactate. The protein operates within amino-sugar metabolism; 1,6-anhydro-N-acetylmuramate degradation. It participates in amino-sugar metabolism; N-acetylmuramate degradation. It functions in the pathway cell wall biogenesis; peptidoglycan recycling. In terms of biological role, specifically catalyzes the cleavage of the D-lactyl ether substituent of MurNAc 6-phosphate, producing GlcNAc 6-phosphate and D-lactate. Together with AnmK, is also required for the utilization of anhydro-N-acetylmuramic acid (anhMurNAc) either imported from the medium or derived from its own cell wall murein, and thus plays a role in cell wall recycling. The protein is N-acetylmuramic acid 6-phosphate etherase of Burkholderia lata (strain ATCC 17760 / DSM 23089 / LMG 22485 / NCIMB 9086 / R18194 / 383).